We begin with the raw amino-acid sequence, 4912 residues long: Probable E3 ubiquitin-protein ligase HERC2 (4912 aa).

Residues 1–67 are disordered; that stretch reads MFNRQASGGA…GSGSAAPPSH (67 aa). The segment covering 8 to 17 has biased composition (gly residues); it reads GGAGSSGQGA. Residues 18–31 show a composition bias toward low complexity; sequence GSSQTASAAPVSAG. Composition is skewed to gly residues over residues 32-41 and 49-59; these read VGVGGGGGAS and SAAGSGSGSGS. 5 RCC1 repeats span residues 634-685, 686-739, 741-789, 791-843, and 844-897; these read NHNA…AITC, GGNL…ALTS, GLVF…ALSS, GQLY…ALSS, and SGEV…VWTQ. 3 disordered regions span residues 1102 to 1129, 1428 to 1475, and 1659 to 1681; these read RLSPTLGKQQEKEEEEREQQHQEPSTSP, QLLQ…PGRG, and QEQEKKPQSMPKQELEEQEEEET. Residues 1446-1458 are compositionally biased toward polar residues; sequence SHSCHSTAGNTPT. Position 1776 is a phosphothreonine (Thr1776). Residues 1917 to 1990 form the MIB/HERC2 domain; sequence SGPDLAKLMK…QYDLQLADSA (74 aa). Disordered regions lie at residues 1994–2018 and 2381–2412; these read ASPTEPEREDVSGSEASPTSDSHPS and GSIYASPDEPDRSDAESQQPGEQDQQLSSGSG. Residues 2396–2412 are compositionally biased toward polar residues; it reads ESQQPGEQDQQLSSGSG. The UBA domain maps to 2511-2557; sequence ATDAQLIGQIMEMGFTRRTVELALKQLSLQAEIMPTPEQIVQWILEH. The interval 2572–2620 is disordered; it reads LASSASSHDPEADSDNECPSSNSTTSSSTSSDTVEGQPMAVSGPAPPVK. Residues 2591–2604 are compositionally biased toward low complexity; the sequence is SSNSTTSSSTSSDT. A CPH domain is found at 2624–2699; sequence RKDFQTADLY…VCFVHIELVE (76 aa). The region spanning 2780–2958 is the DOC domain; that stretch reads TSATLPSLGD…FLASEYSAGV (179 aa). RCC1 repeat units follow at residues 2985 to 3036, 3037 to 3090, 3091 to 3142, 3144 to 3194, 3197 to 3248, 3250 to 3300, and 3302 to 3352; these read PCTV…IVSQ, DGKV…ALTL, DGKV…AISS, GELY…TLAL, DGAV…ALTR, GEVW…AVTD, and GQVY…AWGL. Disordered regions lie at residues 3352 to 3374 and 3953 to 4000; these read LPNASSDEEKRGPVPFSSTRDPL and LPSS…EQPD. Positions 3974–3988 are enriched in low complexity; the sequence is LNSTTSLSSSTVSNV. RCC1 repeat units lie at residues 4049 to 4099, 4101 to 4153, 4155 to 4205, 4207 to 4259, 4261 to 4311, 4313 to 4363, and 4365 to 4415; these read STIY…AVTP, GKLF…ALTT, GEVY…AITA, GHVL…CITD, DNVW…ALTK, GAVY…ACSD, and GEVY…ALST. The region spanning 4547 to 4882 is the HECT domain; the sequence is ALALPHRVWK…IHFCKSIDTD (336 aa). The active-site Glycyl thioester intermediate is Cys4850. Positions 4891-4912 are disordered; that stretch reads EPTEATGSEDNSDLESVASHEG.

Its subcellular location is the cytoplasm. The protein localises to the cytoskeleton. The protein resides in the microtubule organizing center. It is found in the centrosome. It localises to the centriole. The catalysed reaction is S-ubiquitinyl-[E2 ubiquitin-conjugating enzyme]-L-cysteine + [acceptor protein]-L-lysine = [E2 ubiquitin-conjugating enzyme]-L-cysteine + N(6)-ubiquitinyl-[acceptor protein]-L-lysine.. It participates in protein modification; protein ubiquitination. In terms of biological role, probable E3 ubiquitin-protein ligase which accepts ubiquitin from an E2 ubiquitin-conjugating enzyme in the form of a thioester and then directly transfers the ubiquitin to targeted substrates. This chain is Probable E3 ubiquitin-protein ligase HERC2 (HERC2), found in Drosophila melanogaster (Fruit fly).